Here is a 293-residue protein sequence, read N- to C-terminus: Cytochrome c biogenesis protein CcsA (293 aa).

Helical transmembrane passes span 12 to 32 (INIL…AKLT), 39 to 59 (VFSL…GMLL), 78 to 98 (LFLS…LSII), 99 to 119 (GAIG…ILPP), 142 to 162 (VMIF…IYVI), 216 to 236 (FISL…VWAN), 250 to 267 (TWAL…HIRI), and 273 to 293 (KIYA…VTWE).

Belongs to the CcmF/CycK/Ccl1/NrfE/CcsA family. In terms of assembly, may interact with Ccs1.

It localises to the plastid. It is found in the chloroplast thylakoid membrane. In terms of biological role, required during biogenesis of c-type cytochromes (cytochrome c6 and cytochrome f) at the step of heme attachment. This is Cytochrome c biogenesis protein CcsA from Cyanidium caldarium (Red alga).